Reading from the N-terminus, the 523-residue chain is Protein disulfide-isomerase (523 aa).

The first 22 residues, 1 to 22 (MPGVRSLLLALAGVSLAPAVLA), serve as a signal peptide directing secretion. The region spanning 24–137 (DASTDSSDVH…TSYMIKQSLP (114 aa)) is the Thioredoxin 1 domain. Residues cysteine 59 and cysteine 62 each act as nucleophile in the active site. A disulfide bond links cysteine 59 and cysteine 62. The N-linked (GlcNAc...) asparagine glycan is linked to asparagine 170. Residues 344–475 (VIAGDIAPSV…LANFVRDNGK (132 aa)) form the Thioredoxin 2 domain. Residues cysteine 394 and cysteine 397 are joined by a disulfide bond. Basic and acidic residues-rich tracts occupy residues 478 to 502 (VDAYDEKKVEKDGSDVTGKPKDAEA) and 512 to 523 (SEEKADKEHEEL). The interval 478 to 523 (VDAYDEKKVEKDGSDVTGKPKDAEAPPKPSDAPESEEKADKEHEEL) is disordered. Residues 520–523 (HEEL) carry the Prevents secretion from ER motif.

This sequence belongs to the protein disulfide isomerase family.

It is found in the endoplasmic reticulum lumen. The catalysed reaction is Catalyzes the rearrangement of -S-S- bonds in proteins.. Its function is as follows. Participates in the folding of proteins containing disulfide bonds, may be involved in glycosylation, prolyl hydroxylation and triglyceride transfer. This chain is Protein disulfide-isomerase, found in Arthroderma benhamiae (strain ATCC MYA-4681 / CBS 112371) (Trichophyton mentagrophytes).